Here is a 348-residue protein sequence, read N- to C-terminus: Protein RecA (348 aa).

ATP is bound at residue 64–71 (GPESSGKT).

This sequence belongs to the RecA family.

The protein resides in the cytoplasm. In terms of biological role, can catalyze the hydrolysis of ATP in the presence of single-stranded DNA, the ATP-dependent uptake of single-stranded DNA by duplex DNA, and the ATP-dependent hybridization of homologous single-stranded DNAs. It interacts with LexA causing its activation and leading to its autocatalytic cleavage. This is Protein RecA from Blastochloris viridis (Rhodopseudomonas viridis).